Here is a 183-residue protein sequence, read N- to C-terminus: Senescence-associated protein DIN1 (183 aa).

The Rhodanese domain maps to 83–183; sequence AQAGYKHLDV…WTENELPVEE (101 aa).

In terms of biological role, is thought to act during the early stages of leaf senescence. The polypeptide is Senescence-associated protein DIN1 (DIN1) (Raphanus sativus (Radish)).